Consider the following 639-residue polypeptide: Muscarinic acetylcholine receptor M3 (639 aa).

Topologically, residues 1-115 (MLTHYQLCFQ…DPLGGHAVWQ (115 aa)) are extracellular. Asn-16, Asn-44, Asn-45, Asn-54, Asn-97, and Asn-101 each carry an N-linked (GlcNAc...) asparagine glycan. The helical transmembrane segment at 116 to 139 (VVLIAFLTGIIALVTIIGNILVIV) threads the bilayer. The Cytoplasmic segment spans residues 140 to 152 (SFKVNKQLKTVNN). Residues 153-173 (YFLLSLACADLIIGVISMNLF) form a helical membrane-spanning segment. At 174 to 190 (TTYIIMGHWALGNLACD) the chain is on the extracellular side. An intrachain disulfide couples Cys-189 to Cys-269. A helical membrane pass occupies residues 191–212 (LWLSIDYVASNASVMNLLVISF). Residues 213–232 (DRYFSITRPLTYRAKRTTKR) lie on the Cytoplasmic side of the membrane. The helical transmembrane segment at 233–255 (AGVMIGLAWIISFVLWAPAILFW) threads the bilayer. The Extracellular segment spans residues 256 to 277 (QYFVGKRTVPLDECFIQFLSEP). The helical transmembrane segment at 278 to 300 (IITFGTAIAAFYLPVTIMSILYW) threads the bilayer. Residues 301 to 542 (RIYKETEKRT…LIKEKKAAQT (242 aa)) lie on the Cytoplasmic side of the membrane. Disordered stretches follow at residues 370–404 (PNTD…DEED) and 431–471 (LPSS…GGSF). A compositionally biased stretch (low complexity) spans 382-393 (SDSWNNNDAAAS). Basic and acidic residues predominate over residues 443-454 (ELQKSDTDSQEK). Residues 543–563 (LSAILFAFIITWTPYNIMVLV) form a helical membrane-spanning segment. Over 564-576 (NTFCDCVPKTVWN) the chain is Extracellular. A helical transmembrane segment spans residues 577-596 (LGYWLCYINSTVNPVCYALC). At 597-639 (NKMFRNTFKMLLLCQCDKRKRRKQQYQQRQSVIFHKRIPREAS) the chain is on the cytoplasmic side.

It belongs to the G-protein coupled receptor 1 family. Muscarinic acetylcholine receptor subfamily. CHRM3 sub-subfamily. As to expression, brain, heart atria, and ventricle.

Its subcellular location is the cell membrane. The protein resides in the postsynaptic cell membrane. The muscarinic acetylcholine receptor mediates various cellular responses, including inhibition of adenylate cyclase, breakdown of phosphoinositides and modulation of potassium channels through the action of G proteins. Primary transducing effect is Pi turnover. The polypeptide is Muscarinic acetylcholine receptor M3 (CHRM3) (Gallus gallus (Chicken)).